Consider the following 390-residue polypeptide: Endothelial cell-selective adhesion molecule (390 aa).

A signal peptide spans 1–29 (MISLPGPLVTNLLRFLFLGLSALAPPSRA). Positions 30–143 (ELQLHLPANQ…NGQASGHSIK (114 aa)) constitute an Ig-like V-type domain. Over 30–248 (ELQLHLPANQ…LEVSTGPGAA (219 aa)) the chain is Extracellular. Asparagine 108, asparagine 169, asparagine 213, and asparagine 236 each carry an N-linked (GlcNAc...) asparagine glycan. One can recognise an Ig-like C2-type domain in the interval 156–242 (PSCRLQGVPR…AQCNVTLEVS (87 aa)). An intrachain disulfide couples cysteine 174 to cysteine 224. A helical transmembrane segment spans residues 249–269 (VVAGAVVGTLVGLGLLAGLVL). Residues 270-390 (LYHRRGKALE…PAQSQAGSLV (121 aa)) are Cytoplasmic-facing. Serine 301 carries the post-translational modification Phosphoserine. Residues 316 to 365 (ARALRPPHGPPRPGALTPTPSLSSQALPSPRLPTTDGANPQPISLIPGGV) are disordered. Residues threonine 332 and threonine 334 each carry the phosphothreonine modification. The segment covering 333-342 (PTPSLSSQAL) has biased composition (polar residues). Phosphoserine occurs at positions 336, 339, 344, and 371.

As to quaternary structure, interacts with MAGI1.

It is found in the cell junction. The protein resides in the adherens junction. Its subcellular location is the tight junction. It localises to the cell membrane. Can mediate aggregation most likely through a homophilic molecular interaction. This Macaca fascicularis (Crab-eating macaque) protein is Endothelial cell-selective adhesion molecule (ESAM).